A 349-amino-acid polypeptide reads, in one-letter code: MAHQTGIHATEELKEFFAKARAGSIRLIKVIIEDEQLVLGASQEPVGRWDQDYDRAVLPLLDAQEPCYLLFRLDSQNAQGFEWLFLAWSPDNSPVRLKMLYAATRATVKKEFGGGHIKDELFGTVKDDLSLAGYQKHLSSCAAPAPLTSAERELQQIRINEVKTEISVESKHQTLQGLAFPLQPEAQRALQQLKQKTVNYIQLKLDLERETIELVHTEPTNVAQLPSRIPRDAARYHFFLYKHTHEGDALESVVFIYSMPGYKCSIKERMLYSSCKSRLLDSVEQDFQLEIAKKIEIGDGAELTAEFLYDEVHPKQHAFKQAFAKPKGPGGKRGHKRLIRGPGENGEDS.

A2 is modified (N-acetylalanine). ADF-H domains are found at residues 4–139 (QTGI…KHLS) and 177–313 (GLAF…DEVH). K14 carries the post-translational modification N6-acetyllysine. Y309 is subject to Phosphotyrosine. Residues 322–349 (AFAKPKGPGGKRGHKRLIRGPGENGEDS) are disordered. The segment covering 330–339 (GGKRGHKRLI) has biased composition (basic residues). The residue at position 349 (S349) is a Phosphoserine.

Belongs to the actin-binding proteins ADF family. Twinfilin subfamily. Interacts with G-actin; ADP-actin form and capping protein (CP). Isoform 2 interacts (via its N-terminal ADF-H domain) with G-actin (ADP-bound form) with significantly higher affinity than isoform 1. May also be able to interact with TWF1 and phosphoinositides, PI(4,5)P2. When bound to PI(4,5)P2, it is down-regulated. Interacts with MYO7A. Post-translationally, phosphorylated on both serine/threonine and tyrosine. Isoform 1 is ubiquitously expressed (at protein level). Isoform 2 expression is restricted to heart and skeletal muscle where it is the predominant form.

The protein resides in the cytoplasm. The protein localises to the cytoskeleton. It localises to the perinuclear region. It is found in the cell projection. Its subcellular location is the stereocilium. Actin-binding protein involved in motile and morphological processes. Inhibits actin polymerization, likely by sequestering G-actin. By capping the barbed ends of filaments, it also regulates motility. Seems to play an important role in clathrin-mediated endocytosis and distribution of endocytic organelles. May play a role in regulating the mature length of the middle and short rows of stereocilia. The sequence is that of Twinfilin-2 (Twf2) from Mus musculus (Mouse).